A 53-amino-acid polypeptide reads, in one-letter code: ATP synthase protein 8 (53 aa).

A helical transmembrane segment spans residues 9-29 (WIFFLFFFICIFLIFNIMNYF).

It belongs to the ATPase protein 8 family. In terms of assembly, F-type ATPases have 2 components, CF(1) - the catalytic core - and CF(0) - the membrane proton channel.

The protein localises to the mitochondrion membrane. Functionally, mitochondrial membrane ATP synthase (F(1)F(0) ATP synthase or Complex V) produces ATP from ADP in the presence of a proton gradient across the membrane which is generated by electron transport complexes of the respiratory chain. F-type ATPases consist of two structural domains, F(1) - containing the extramembraneous catalytic core and F(0) - containing the membrane proton channel, linked together by a central stalk and a peripheral stalk. During catalysis, ATP synthesis in the catalytic domain of F(1) is coupled via a rotary mechanism of the central stalk subunits to proton translocation. Part of the complex F(0) domain. Minor subunit located with subunit a in the membrane. The chain is ATP synthase protein 8 (mt:ATPase8) from Bombyx mori (Silk moth).